Consider the following 291-residue polypeptide: ATP synthase gamma chain (291 aa).

Belongs to the ATPase gamma chain family. As to quaternary structure, F-type ATPases have 2 components, CF(1) - the catalytic core - and CF(0) - the membrane proton channel. CF(1) has five subunits: alpha(3), beta(3), gamma(1), delta(1), epsilon(1). CF(0) has three main subunits: a, b and c.

The protein localises to the cell inner membrane. In terms of biological role, produces ATP from ADP in the presence of a proton gradient across the membrane. The gamma chain is believed to be important in regulating ATPase activity and the flow of protons through the CF(0) complex. This chain is ATP synthase gamma chain, found in Burkholderia multivorans (strain ATCC 17616 / 249).